A 490-amino-acid polypeptide reads, in one-letter code: N-succinylglutamate 5-semialdehyde dehydrogenase (490 aa).

220–225 (GSANTG) is an NAD(+) binding site. Active-site residues include E243 and C277.

It belongs to the aldehyde dehydrogenase family. AstD subfamily.

It catalyses the reaction N-succinyl-L-glutamate 5-semialdehyde + NAD(+) + H2O = N-succinyl-L-glutamate + NADH + 2 H(+). It participates in amino-acid degradation; L-arginine degradation via AST pathway; L-glutamate and succinate from L-arginine: step 4/5. Its function is as follows. Catalyzes the NAD-dependent reduction of succinylglutamate semialdehyde into succinylglutamate. The protein is N-succinylglutamate 5-semialdehyde dehydrogenase of Shigella dysenteriae serotype 1 (strain Sd197).